A 440-amino-acid chain; its full sequence is Enolase 1-2 (440 aa).

2 residues coordinate substrate: His-160 and Glu-169. The Proton donor role is filled by Glu-212. Mg(2+)-binding residues include Asp-247, Glu-296, and Asp-321. Glu-296 and Asp-321 together coordinate substrate. The active-site Proton acceptor is Lys-346. Substrate-binding positions include 373 to 376 (SHRS) and Lys-397.

It belongs to the enolase family. As to quaternary structure, homodimer. The cofactor is Mg(2+).

Its subcellular location is the cytoplasm. The catalysed reaction is (2R)-2-phosphoglycerate = phosphoenolpyruvate + H2O. It functions in the pathway carbohydrate degradation; glycolysis; pyruvate from D-glyceraldehyde 3-phosphate: step 4/5. The protein is Enolase 1-2 (eno102) of Schizosaccharomyces pombe (strain 972 / ATCC 24843) (Fission yeast).